A 258-amino-acid polypeptide reads, in one-letter code: UPF0246 protein Pnap_3166 (258 aa).

Belongs to the UPF0246 family.

This Polaromonas naphthalenivorans (strain CJ2) protein is UPF0246 protein Pnap_3166.